Consider the following 354-residue polypeptide: G-protein coupled estrogen receptor 1 (354 aa).

The Extracellular portion of the chain corresponds to 1 to 40 (MEEQTTSLVWIYVNSTEQLNTSYEYNTTYLIEDSDKYQSY). A helical membrane pass occupies residues 41 to 61 (VIGLFLSCLYTILLFPIGFIG). Residues 62–81 (NILILVVNLNHRGKMAIPDL) lie on the Cytoplasmic side of the membrane. Residues 82 to 102 (YFVNLAVADLILVADSLIEVF) form a helical membrane-spanning segment. Over 103–112 (NLNEKYYDYA) the chain is Extracellular. The chain crosses the membrane as a helical span at residues 113–133 (VLCTFMSLFLQVNMYSSIFFL). A disulfide bridge links C115 with C192. The Cytoplasmic portion of the chain corresponds to 134 to 160 (TWMSFDRYIALANSMSSSPLRTMQHAK). The helical transmembrane segment at 161–181 (LSCGLIWMASILATLLPFTIV) threads the bilayer. Residues 182–202 (QTQHRGEVHFCFANVFEIQWL) are Extracellular-facing. A helical membrane pass occupies residues 203 to 223 (EVTIGFLVPFSIIGLCYSLIG). Over 224–245 (RILMRSQKHRGLWPRRQKALRM) the chain is Cytoplasmic. Residues 246–266 (IVVVVLVFFICWLPENVFISI) traverse the membrane as a helical segment. The Extracellular segment spans residues 267–292 (QLLQGTADPSQRTATTLRHDYPLTGH). The chain crosses the membrane as a helical span at residues 293-313 (IVNLAAFSNSCLNPIIYSFLG). The Cytoplasmic portion of the chain corresponds to 314 to 353 (ETFRDKLRLFIKQKASWSVVNRFCHHGLDLHLPVRSEVSE).

It belongs to the G-protein coupled receptor 1 family. Homodimer. Heterodimer. As to expression, expressed in oocytes (at protein level). Highly expressed in brain, heart, testis and ovary. Weakly expressed in muscle and intestine.

The protein resides in the nucleus. It is found in the cytoplasm. The protein localises to the perinuclear region. Its subcellular location is the cytoskeleton. It localises to the cytoplasmic vesicle membrane. The protein resides in the cell membrane. It is found in the basolateral cell membrane. The protein localises to the endoplasmic reticulum membrane. Its subcellular location is the early endosome. It localises to the recycling endosome. The protein resides in the golgi apparatus. It is found in the trans-Golgi network. The protein localises to the golgi apparatus membrane. Its subcellular location is the cell projection. It localises to the dendrite. The protein resides in the dendritic spine membrane. It is found in the axon. The protein localises to the postsynaptic density. Its subcellular location is the mitochondrion membrane. Membrane G-protein coupled estrogen receptor that binds to 17-beta-estradiol (E2) with high affinity, leading to rapid and transient activation of numerous intracellular signaling pathways. Plays a role in the embryonic development of sensory and motor neurons. May induce apoptosis and reduce proliferation of brain cells. Involved in maintenance of meiotic arrest in oocytes. The chain is G-protein coupled estrogen receptor 1 (gper1) from Micropogonias undulatus (Atlantic croaker).